The chain runs to 201 residues: Dephospho-CoA kinase (201 aa).

Residues 3-201 (ILGLTGGIGS…QIDSRVGCKI (199 aa)) form the DPCK domain. 11–16 (GSGKSL) provides a ligand contact to ATP.

Belongs to the CoaE family.

It localises to the cytoplasm. The enzyme catalyses 3'-dephospho-CoA + ATP = ADP + CoA + H(+). The protein operates within cofactor biosynthesis; coenzyme A biosynthesis; CoA from (R)-pantothenate: step 5/5. Its function is as follows. Catalyzes the phosphorylation of the 3'-hydroxyl group of dephosphocoenzyme A to form coenzyme A. In Ehrlichia ruminantium (strain Welgevonden), this protein is Dephospho-CoA kinase.